A 104-amino-acid polypeptide reads, in one-letter code: Small ribosomal subunit protein bS6c (104 aa).

It belongs to the bacterial ribosomal protein bS6 family.

It localises to the plastid. The protein localises to the cyanelle. In terms of biological role, binds together with bS18 to 16S ribosomal RNA. This Cyanophora paradoxa protein is Small ribosomal subunit protein bS6c (rps6).